We begin with the raw amino-acid sequence, 476 residues long: Ovarian-specific serine/threonine-protein kinase Lok (476 aa).

Residues 69 to 129 form the FHA domain; it reads FTAGRGEAND…NGTFVNNEKI (61 aa). The Protein kinase domain occupies 174–441; it reads YYVNRKLGSG…IDDVLQSSWL (268 aa). ATP contacts are provided by residues 180–188 and lysine 203; that span reads LGSGAYGLV. The active-site Proton acceptor is aspartate 303.

The protein belongs to the protein kinase superfamily. CAMK Ser/Thr protein kinase family. CDS1 subfamily. In stage 3 embryos, both isoforms are expressed in both somatic and pole cell nuclei. Expression in pole cell nuclei is sustained until stage 9 and weakly expressed after pole cell invagination into the abdominal cavity.

The protein resides in the nucleus speckle. The enzyme catalyses L-seryl-[protein] + ATP = O-phospho-L-seryl-[protein] + ADP + H(+). The catalysed reaction is L-threonyl-[protein] + ATP = O-phospho-L-threonyl-[protein] + ADP + H(+). Its function is as follows. May have a role in germline establishment. This is Ovarian-specific serine/threonine-protein kinase Lok (lok) from Drosophila melanogaster (Fruit fly).